The following is a 203-amino-acid chain: Urease accessory protein UreG (203 aa).

11 to 18 lines the GTP pocket; it reads GPVGSGKT.

It belongs to the SIMIBI class G3E GTPase family. UreG subfamily. Homodimer. UreD, UreF and UreG form a complex that acts as a GTP-hydrolysis-dependent molecular chaperone, activating the urease apoprotein by helping to assemble the nickel containing metallocenter of UreC. The UreE protein probably delivers the nickel.

The protein resides in the cytoplasm. Facilitates the functional incorporation of the urease nickel metallocenter. This process requires GTP hydrolysis, probably effectuated by UreG. This chain is Urease accessory protein UreG, found in Prochlorococcus marinus (strain MIT 9301).